The following is a 729-amino-acid chain: MDAKTNDKSAGKCPFTSGRSHRIRDWWPGQLDVQVLHHNSNLSDPMDEDFDYAREFESLDLNAVIKDLTALMTDSQDWWPADFGHYGGLMIRLAWHSAGTYRITDGRGGAGAGQQRFAPLNSWPDNVLLDRGRRLLWPIKQKYGRKISWADLLVLSGNVALESMGFKTFGFAGGRADVWEPEELYWGPEGTWLGDERYSGERQLAEPLAAVQMGLIYVNPEGPNGKPDPIAAATDIRETFFRMAMNDEETVALIAGGHTFGKTHGAGDASLVGPAPESAPIEDQGLGWNSKFGTGKGGDSIGSGLEVTWTQTPTTWDNNFFDTLFKYEWELTKSPAGAYQWQAKDAPAITPDAHDTSKKHVPTMLTTDLSLRFDPAYGKISKHFHENPDQFADAFARAWYKLTHRDMGPRERYLGPLVPKETLIWQDPIPAVDHALVDDKDIAELKAKVLASGLTVPQLVSTAWASASTFRGSDKRGGANGARIRLAPQKDWEVNQPAQLKTVLARLEAIQSEFNGAQTGGKKVSLADLIVLAGCFAVEKAANDVGIDLKVPFTPGRMDASQDQTDVDSFAPLEPRADGFRNYIGSRHQFMTPEEALVDRAQLLNLTGPEMTVLVGGLRVLGANAADSRHGVFTKQPGTLTNDFFANLLTMDTVWQPVAGQDDVYEGRDRKTNAVQWTGTRVDLIFGSHSQLRAFAEVYACTDAKEKFARDFVAAWTKVMNADRFDLHR.

The tryptophyl-tyrosyl-methioninium (Trp-Tyr) (with M-243) cross-link spans 95-217 (WHSAGTYRIT…LAAVQMGLIY (123 aa)). The active-site Proton acceptor is histidine 96. The tryptophyl-tyrosyl-methioninium (Tyr-Met) (with W-95) cross-link spans 217 to 243 (YVNPEGPNGKPDPIAAATDIRETFFRM). Histidine 258 is a heme b binding site.

It belongs to the peroxidase family. Peroxidase/catalase subfamily. Homodimer or homotetramer. Heme b is required as a cofactor. In terms of processing, formation of the three residue Trp-Tyr-Met cross-link is important for the catalase, but not the peroxidase activity of the enzyme.

The enzyme catalyses H2O2 + AH2 = A + 2 H2O. The catalysed reaction is 2 H2O2 = O2 + 2 H2O. Bifunctional enzyme with both catalase and broad-spectrum peroxidase activity. In Nitrobacter hamburgensis (strain DSM 10229 / NCIMB 13809 / X14), this protein is Catalase-peroxidase.